A 44-amino-acid polypeptide reads, in one-letter code: Defensin-like peptide (44 aa).

Disulfide bonds link C7-C32, C18-C40, and C22-C42.

In terms of tissue distribution, hemolymph.

It is found in the secreted. Has antibacterial activity against the Gram-positive bacterium S.lutea (MIC=1.9 uM). Lacks antibacterial activity against the Gram-positive bacteria L.monocytogenes and M.luteus, and the Gram-negative bacteria E.coli D31, E.coli ATCC 25922, and S.typhimurium. Has antifungal activity against A.niger (MIC=2.9 uM), C.albicans (MIC=2.9 uM), C.fructus (MIC=2.9 uM), C.wickerhamii (MIC=2.9 uM), P.pastoris (MIC=2.9 uM), P.stiptis (MIC=2.9 uM), P.tannophilus (MIC=2.9 uM), T.harzianum (MIC=2.9 uM), and Z.marxianus (MIC=2.9 uM), but lacks antifungal activity against C.albidus, F.oxysporum, and S.cerevisiae. In Galleria mellonella (Greater wax moth), this protein is Defensin-like peptide.